The primary structure comprises 222 residues: Pyridoxine/pyridoxamine 5'-phosphate oxidase (222 aa).

Residues 71 to 76 (RMVLLK), 86 to 87 (YT), Lys93, and Gln115 contribute to the FMN site. Substrate is bound at residue Lys76. 3 residues coordinate substrate: Tyr133, Arg137, and Ser141. FMN is bound by residues 150-151 (QS) and Trp195. 201 to 203 (RLH) is a binding site for substrate. Position 205 (Arg205) interacts with FMN.

The protein belongs to the pyridoxamine 5'-phosphate oxidase family. As to quaternary structure, homodimer. FMN is required as a cofactor.

It catalyses the reaction pyridoxamine 5'-phosphate + O2 + H2O = pyridoxal 5'-phosphate + H2O2 + NH4(+). The enzyme catalyses pyridoxine 5'-phosphate + O2 = pyridoxal 5'-phosphate + H2O2. Its pathway is cofactor metabolism; pyridoxal 5'-phosphate salvage; pyridoxal 5'-phosphate from pyridoxamine 5'-phosphate: step 1/1. It participates in cofactor metabolism; pyridoxal 5'-phosphate salvage; pyridoxal 5'-phosphate from pyridoxine 5'-phosphate: step 1/1. Functionally, catalyzes the oxidation of either pyridoxine 5'-phosphate (PNP) or pyridoxamine 5'-phosphate (PMP) into pyridoxal 5'-phosphate (PLP). The sequence is that of Pyridoxine/pyridoxamine 5'-phosphate oxidase from Caulobacter vibrioides (strain ATCC 19089 / CIP 103742 / CB 15) (Caulobacter crescentus).